Reading from the N-terminus, the 120-residue chain is Movement protein TGB2 (120 aa).

Residues 1–8 (MPFAQPPD) are Cytoplasmic-facing. A helical membrane pass occupies residues 9–29 (YSKSVFPIAVGIAVAVVLFTL). Residues 30-71 (TRSTLPQVGDNIHNLPHGGNYQDGTKRISYCGPRDSFPSSSL) lie on the Lumenal side of the membrane. Residues 72-92 (ISSGTPMIIGIIIFLIFAIYV) form a helical membrane-spanning segment. Residues 93–120 (SEKWSRSGSRRCSCCVPGAPACTATVHE) are Cytoplasmic-facing.

It belongs to the Tymovirales TGBp2 protein family.

The protein resides in the host endoplasmic reticulum membrane. Plays a role in viral cell-to-cell propagation, by facilitating genome transport to neighboring plant cells through plasmosdesmata,. In Crataegus (hawthorn), this protein is Movement protein TGB2.